We begin with the raw amino-acid sequence, 63 residues long: Large ribosomal subunit protein bL28 (63 aa).

The disordered stretch occupies residues 1 to 20 (MSRRCAITGKGPMVGNNVSH).

Belongs to the bacterial ribosomal protein bL28 family.

The polypeptide is Large ribosomal subunit protein bL28 (Campylobacter curvus (strain 525.92)).